A 405-amino-acid polypeptide reads, in one-letter code: MENIMTLPKIKQVRAWFTGGATAEKGAGGGDYHDQGANHWIDDHIATPMSKYRDYEQSRQSFGINVLGTLIVEVEAENGQTGFAVSTAGEMGCFIVEKHLNRFIEGKCVSDIKLIHDQMLNATLYYSGSGGLVMNTISCVDLALWDLFGKVVGLPVYKLLGGAVRDEIQFYATGARPDLAKEMGFIGGKMPTHWGPHDGDAGIRKDAAMVADMREKCGEDFWLMLDCWMSQDVNYAIKLAHACAPYNLKWIEECLPPQQYEGYRELKHNAPAGMMVTSGEHHGTLQSFRTLSENGIDIMQPDVGWCGGLTTLVEIAAIAKSRGQLVVPHGSSVYSHHAVITFTNTPFSEFLMTSPDCSTMRPQFDPILLNEPVPVNGRIHKSVLDKPGFGVELNRDCNLKRPYSH.

2 residues coordinate substrate: histidine 33 and arginine 59. Mg(2+)-binding residues include aspartate 226, glutamate 252, and glutamate 280. Histidine 329 functions as the Proton acceptor in the catalytic mechanism. Glutamate 349 is a binding site for substrate.

Belongs to the mandelate racemase/muconate lactonizing enzyme family. RhamD subfamily. In terms of assembly, homooctamer; tetramer of dimers. Mg(2+) serves as cofactor.

It catalyses the reaction L-rhamnonate = 2-dehydro-3-deoxy-L-rhamnonate + H2O. Catalyzes the dehydration of L-rhamnonate to 2-keto-3-deoxy-L-rhamnonate (KDR). This Escherichia coli O6:K15:H31 (strain 536 / UPEC) protein is L-rhamnonate dehydratase.